Here is a 217-residue protein sequence, read N- to C-terminus: Deoxyribose-phosphate aldolase (217 aa).

Asp-95 serves as the catalytic Proton donor/acceptor. Catalysis depends on Lys-156, which acts as the Schiff-base intermediate with acetaldehyde. Lys-184 (proton donor/acceptor) is an active-site residue.

This sequence belongs to the DeoC/FbaB aldolase family. DeoC type 1 subfamily.

The protein localises to the cytoplasm. The enzyme catalyses 2-deoxy-D-ribose 5-phosphate = D-glyceraldehyde 3-phosphate + acetaldehyde. It participates in carbohydrate degradation; 2-deoxy-D-ribose 1-phosphate degradation; D-glyceraldehyde 3-phosphate and acetaldehyde from 2-deoxy-alpha-D-ribose 1-phosphate: step 2/2. In terms of biological role, catalyzes a reversible aldol reaction between acetaldehyde and D-glyceraldehyde 3-phosphate to generate 2-deoxy-D-ribose 5-phosphate. The polypeptide is Deoxyribose-phosphate aldolase (Thermosynechococcus vestitus (strain NIES-2133 / IAM M-273 / BP-1)).